The primary structure comprises 76 residues: DNA-directed RNA polymerase subunit epsilon (76 aa).

The protein belongs to the RNA polymerase subunit epsilon family. In terms of assembly, RNAP is composed of a core of 2 alpha, a beta and a beta' subunit. The core is associated with a delta subunit, and at least one of epsilon or omega. When a sigma factor is associated with the core the holoenzyme is formed, which can initiate transcription.

The enzyme catalyses RNA(n) + a ribonucleoside 5'-triphosphate = RNA(n+1) + diphosphate. In terms of biological role, a non-essential component of RNA polymerase (RNAP). The chain is DNA-directed RNA polymerase subunit epsilon from Streptococcus gordonii (strain Challis / ATCC 35105 / BCRC 15272 / CH1 / DL1 / V288).